The chain runs to 132 residues: Small ribosomal subunit protein uS8 (132 aa).

This sequence belongs to the universal ribosomal protein uS8 family. As to quaternary structure, part of the 30S ribosomal subunit. Contacts proteins S5 and S12.

One of the primary rRNA binding proteins, it binds directly to 16S rRNA central domain where it helps coordinate assembly of the platform of the 30S subunit. In Micrococcus luteus (strain ATCC 4698 / DSM 20030 / JCM 1464 / CCM 169 / CCUG 5858 / IAM 1056 / NBRC 3333 / NCIMB 9278 / NCTC 2665 / VKM Ac-2230) (Micrococcus lysodeikticus), this protein is Small ribosomal subunit protein uS8.